Consider the following 337-residue polypeptide: Ribosomal RNA small subunit methyltransferase C (337 aa).

This sequence belongs to the methyltransferase superfamily. RsmC family. As to quaternary structure, monomer.

The protein resides in the cytoplasm. It catalyses the reaction guanosine(1207) in 16S rRNA + S-adenosyl-L-methionine = N(2)-methylguanosine(1207) in 16S rRNA + S-adenosyl-L-homocysteine + H(+). Specifically methylates the guanine in position 1207 of 16S rRNA in the 30S particle. The protein is Ribosomal RNA small subunit methyltransferase C of Acinetobacter baumannii (strain AB307-0294).